The primary structure comprises 577 residues: Proline--tRNA ligase (577 aa).

This sequence belongs to the class-II aminoacyl-tRNA synthetase family. ProS type 1 subfamily. Homodimer.

It is found in the cytoplasm. It catalyses the reaction tRNA(Pro) + L-proline + ATP = L-prolyl-tRNA(Pro) + AMP + diphosphate. Catalyzes the attachment of proline to tRNA(Pro) in a two-step reaction: proline is first activated by ATP to form Pro-AMP and then transferred to the acceptor end of tRNA(Pro). As ProRS can inadvertently accommodate and process non-cognate amino acids such as alanine and cysteine, to avoid such errors it has two additional distinct editing activities against alanine. One activity is designated as 'pretransfer' editing and involves the tRNA(Pro)-independent hydrolysis of activated Ala-AMP. The other activity is designated 'posttransfer' editing and involves deacylation of mischarged Ala-tRNA(Pro). The misacylated Cys-tRNA(Pro) is not edited by ProRS. This is Proline--tRNA ligase from Marinobacter nauticus (strain ATCC 700491 / DSM 11845 / VT8) (Marinobacter aquaeolei).